The following is a 701-amino-acid chain: Elongation factor G (701 aa).

Positions 8-286 constitute a tr-type G domain; it reads ERIRNIGIIA…AVVYYLPSPV (279 aa). Residues 17–24, 85–89, and 139–142 each bind GTP; these read AHIDAGKT, DTPGH, and NKMD.

Belongs to the TRAFAC class translation factor GTPase superfamily. Classic translation factor GTPase family. EF-G/EF-2 subfamily.

Its subcellular location is the cytoplasm. Its function is as follows. Catalyzes the GTP-dependent ribosomal translocation step during translation elongation. During this step, the ribosome changes from the pre-translocational (PRE) to the post-translocational (POST) state as the newly formed A-site-bound peptidyl-tRNA and P-site-bound deacylated tRNA move to the P and E sites, respectively. Catalyzes the coordinated movement of the two tRNA molecules, the mRNA and conformational changes in the ribosome. This is Elongation factor G from Roseiflexus castenholzii (strain DSM 13941 / HLO8).